The following is a 1161-amino-acid chain: DNA-directed RNA polymerase subunit beta' (1161 aa).

Zn(2+) is bound by residues Cys60, Cys62, Cys75, and Cys78. Asp449, Asp451, and Asp453 together coordinate Mg(2+). 4 residues coordinate Zn(2+): Cys790, Cys864, Cys871, and Cys874.

This sequence belongs to the RNA polymerase beta' chain family. As to quaternary structure, the RNAP catalytic core consists of 2 alpha, 1 beta, 1 beta' and 1 omega subunit. When a sigma factor is associated with the core the holoenzyme is formed, which can initiate transcription. The cofactor is Mg(2+). Zn(2+) is required as a cofactor.

The enzyme catalyses RNA(n) + a ribonucleoside 5'-triphosphate = RNA(n+1) + diphosphate. Its function is as follows. DNA-dependent RNA polymerase catalyzes the transcription of DNA into RNA using the four ribonucleoside triphosphates as substrates. The chain is DNA-directed RNA polymerase subunit beta' from Clostridioides difficile (strain 630) (Peptoclostridium difficile).